Consider the following 35-residue polypeptide: Alpha-amanitin proprotein 1 (35 aa).

A propeptide spanning residues 1 to 10 is cleaved from the precursor; the sequence is MFDTNATRLP. Ile11 bears the (3R,4R)-4,5-dihydroxyisoleucine; in form alpha-amanitin mark. Ile11 carries the (3R,4S)-4-hydroxyisoleucine; in form gamma-amanitin modification. Positions 11 to 18 form a cross-link, cyclopeptide (Ile-Pro); the sequence is IWGIGCNP. Residues 12–16 constitute a cross-link (2'-cysteinyl-6'-hydroxytryptophan sulfoxide (Trp-Cys)); that stretch reads WGIGC. The residue at position 18 (Pro18) is a 4-hydroxyproline. Positions 19–35 are excised as a propeptide; that stretch reads WTAEHVDQTLASGNDIC.

It belongs to the MSDIN fungal toxin family. In terms of processing, processed by the macrocyclase-peptidase enzyme POPB to yield a toxic bicyclic octapeptide. POPB first removes 10 residues from the N-terminus. Conformational trapping of the remaining peptide forces the enzyme to release this intermediate rather than proceed to macrocyclization. The enzyme rebinds the remaining peptide in a different conformation and catalyzes macrocyclization of the N-terminal 8 residues.

Major toxin belonging to the bicyclic octapeptides amatoxins that acts by binding non-competitively to RNA polymerase II and greatly slowing the elongation of transcripts from target promoters. This chain is Alpha-amanitin proprotein 1, found in Galerina marginata (strain CBS 339.88).